Reading from the N-terminus, the 58-residue chain is Protein SHMOOSE (58 aa).

The segment at 27 to 58 (FGATPNKSNNHAHYYNHPNPDFPNSPHPYHPR) is disordered. Residues 35–45 (NNHAHYYNHPN) show a composition bias toward low complexity. Residues 46-58 (PDFPNSPHPYHPR) show a composition bias toward pro residues.

In terms of assembly, interacts with IMMT/mitofilin. As to expression, detected in cerebrospinal fluid (at protein level).

The protein resides in the mitochondrion. It localises to the nucleus. Functionally, increases neural cell metabolic activity and mitochondrial oxygen consumption rate. The protein is Protein SHMOOSE of Homo sapiens (Human).